Here is a 186-residue protein sequence, read N- to C-terminus: Der GTPase-activating protein YihI (186 aa).

The segment at 39–77 (LDAKAREDKKKRKHKGLASGSRHSAVEEKANKLQNEIKD) is disordered. Basic and acidic residues predominate over residues 62 to 77 (SAVEEKANKLQNEIKD).

This sequence belongs to the YihI family. As to quaternary structure, interacts with Der.

In terms of biological role, a GTPase-activating protein (GAP) that modifies Der/EngA GTPase function. May play a role in ribosome biogenesis. This Haemophilus influenzae (strain 86-028NP) protein is Der GTPase-activating protein YihI.